A 41-amino-acid chain; its full sequence is Large ribosomal subunit protein bL36 (41 aa).

The protein belongs to the bacterial ribosomal protein bL36 family.

The chain is Large ribosomal subunit protein bL36 from Methylorubrum extorquens (strain CM4 / NCIMB 13688) (Methylobacterium extorquens).